Reading from the N-terminus, the 340-residue chain is Protein B17 (340 aa).

This sequence belongs to the orthopoxvirus B17 protein family.

This is Protein B17 from Variola virus (isolate Human/India/Ind3/1967) (VARV).